A 129-amino-acid chain; its full sequence is M-zodatoxin-Lt8g (129 aa).

Positions 1–20 (MKYFVVALALVAAFACIAES) are cleaved as a signal peptide. The propeptide occupies 21 to 60 (KPAESEHELAEVEEENELADLEDAVWLEHLADLSDLEEAR). The short motif at 57 to 60 (EEAR) is the Processing quadruplet motif element.

In terms of processing, cleavage of the propeptide depends on the processing quadruplet motif (XXXR, with at least one of X being E). In terms of tissue distribution, expressed by the venom gland.

It localises to the secreted. Functionally, insecticidal, cytolytic and antimicrobial peptide. Has insecticidal activity against the flesh fly S.carnaria. Has antibacterial activity against the Gram-negative bacteria E.coli. Forms voltage-dependent, ion-permeable channels in membranes. At high concentration causes cell membrane lysis. In Lachesana tarabaevi (Spider), this protein is M-zodatoxin-Lt8g (cit 1-8).